The chain runs to 260 residues: Ribonuclease HII (260 aa).

The region spanning 75–260 is the RNase H type-2 domain; it reads ELIAGVDEVG…FEPIKSIIKK (186 aa). The a divalent metal cation site is built by aspartate 81, glutamate 82, and aspartate 173.

This sequence belongs to the RNase HII family. Requires Mn(2+) as cofactor. The cofactor is Mg(2+).

The protein localises to the cytoplasm. The enzyme catalyses Endonucleolytic cleavage to 5'-phosphomonoester.. Functionally, endonuclease that specifically degrades the RNA of RNA-DNA hybrids. This chain is Ribonuclease HII, found in Streptococcus thermophilus (strain CNRZ 1066).